The chain runs to 135 residues: MKQSIVHIALVVNDYDEAIDFYVNKLKFDLIEDTYQAEQDKRWVVVSPPGSNGVSLLLARASKPEQHDFIGNQAGGRVFLFLNTDDFWRDYNRMQLDGIKFVRPPQEQDYGTVAVFEDLYGNLWDLLQLNDKQPI.

One can recognise a VOC domain in the interval serine 4–leucine 129.

This sequence to B.subtilis YwkD.

This is an uncharacterized protein from Shewanella frigidimarina (strain NCIMB 400).